The following is a 54-amino-acid chain: uncharacterized protein (54 aa).

A signal peptide spans 1 to 21 (MNSKQILSLSAFAMTIATAAA). At 22-29 (GNWNAGDT) the chain is on the extracellular side. Residues 30–50 (IALLIGIAMFFVLLLALLGWI) form a helical membrane-spanning segment. The Cytoplasmic segment spans residues 51–54 (SRKK).

It localises to the membrane. This is an uncharacterized protein from Dictyostelium discoideum (Social amoeba).